Here is an 865-residue protein sequence, read N- to C-terminus: DNA-directed RNA polymerase subunit Rpo1N (865 aa).

Residues cysteine 60, cysteine 63, cysteine 70, histidine 73, cysteine 100, cysteine 103, cysteine 146, and cysteine 149 each contribute to the Zn(2+) site. Mg(2+) contacts are provided by aspartate 451, aspartate 453, and aspartate 455. The tract at residues 500–531 (EHTSSQGKRLFSVRSRPPDPQEGRAPPPDREG) is disordered. The segment covering 515 to 531 (RPPDPQEGRAPPPDREG) has biased composition (basic and acidic residues).

It belongs to the RNA polymerase beta' chain family. As to quaternary structure, part of the RNA polymerase complex. Requires Mg(2+) as cofactor. Zn(2+) serves as cofactor.

Its subcellular location is the cytoplasm. The catalysed reaction is RNA(n) + a ribonucleoside 5'-triphosphate = RNA(n+1) + diphosphate. Its function is as follows. DNA-dependent RNA polymerase (RNAP) catalyzes the transcription of DNA into RNA using the four ribonucleoside triphosphates as substrates. Forms the clamp head domain. The sequence is that of DNA-directed RNA polymerase subunit Rpo1N from Methanothermobacter thermautotrophicus (strain Winter) (Methanobacterium thermoautotrophicum).